Consider the following 415-residue polypeptide: Arrestin red cell isoform 3 (415 aa).

The protein belongs to the arrestin family.

Its subcellular location is the cytoplasm. The sequence is that of Arrestin red cell isoform 3 from Oncorhynchus mykiss (Rainbow trout).